The chain runs to 184 residues: Probable RNA 2'-phosphotransferase (184 aa).

The protein belongs to the KptA/TPT1 family.

In terms of biological role, removes the 2'-phosphate from RNA via an intermediate in which the phosphate is ADP-ribosylated by NAD followed by a presumed transesterification to release the RNA and generate ADP-ribose 1''-2''-cyclic phosphate (APPR&gt;P). May function as an ADP-ribosylase. The polypeptide is Probable RNA 2'-phosphotransferase (Rhizobium leguminosarum bv. trifolii (strain WSM2304)).